The chain runs to 249 residues: Benzil reductase ((S)-benzoin forming) (249 aa).

Positions 6, 87, 154, 158, 189, and 191 each coordinate NADP(+). The active-site Proton acceptor is the Tyr154.

This sequence belongs to the short-chain dehydrogenases/reductases (SDR) family.

It is found in the cytoplasm. The catalysed reaction is (S)-benzoin + NADP(+) = benzil + NADPH + H(+). The enzyme catalyses 2-hydroxy-1-phenyl-1-propanone + NADP(+) = 1-phenyl-1,2-propanedione + NADPH + H(+). With respect to regulation, inhibited by Cibacron blue 3GA, a general SDR family inhibitor. Functionally, reduces benzil stereospecifically to (S)-benzoin. Can also reduce 1-phenyl-1,2-propanedione, 1,4-naphthoquinone, 1-(4-methyl-phenyl)-2-phenyl-ethane-1,2-dione, 1-(4-fluoro-phenyl)-2-phenyl-ethane-1,2-dione, methyl benzoylformate and p-nitrobenzaldehyde in decreasing order. The chain is Benzil reductase ((S)-benzoin forming) from Bacillus cereus.